Reading from the N-terminus, the 397-residue chain is Lipid-A-disaccharide synthase (397 aa).

It belongs to the LpxB family.

It carries out the reaction a lipid X + a UDP-2-N,3-O-bis[(3R)-3-hydroxyacyl]-alpha-D-glucosamine = a lipid A disaccharide + UDP + H(+). The protein operates within bacterial outer membrane biogenesis; LPS lipid A biosynthesis. Condensation of UDP-2,3-diacylglucosamine and 2,3-diacylglucosamine-1-phosphate to form lipid A disaccharide, a precursor of lipid A, a phosphorylated glycolipid that anchors the lipopolysaccharide to the outer membrane of the cell. This Mannheimia succiniciproducens (strain KCTC 0769BP / MBEL55E) protein is Lipid-A-disaccharide synthase.